The primary structure comprises 265 residues: MTLRLSAIDLRHSNGTLALRGLDLSIERGERVAIIGPSGAGKTTLLNLLASALPPSAGQLEVLGVNPWQLSSRQRQQLRSRIALIHQAPPLPARQRVVTAVSAGKLGQWGLGKSLLNLLHPLDVPGARAVLARLDLADKLFERCQQLSGGQLQRVGIARALYQAPELLLADEPVSAMDPRLADHTLALLCQHAIEHNVTLVASLHAVELALAHFPRIIGVRDGRIHFDLPAGEVERQHLDTLYANEQLSPQQVCEVAETVWAPRC.

The region spanning 3 to 247 is the ABC transporter domain; sequence LRLSAIDLRH…HLDTLYANEQ (245 aa). Residue 36-43 coordinates ATP; it reads GPSGAGKT.

The protein belongs to the ABC transporter superfamily. Phosphonates importer (TC 3.A.1.9.1) family. In terms of assembly, the complex is composed of two ATP-binding proteins (PhnC), two transmembrane proteins (PhnE) and a solute-binding protein (PhnD).

The protein localises to the cell inner membrane. It carries out the reaction phosphonate(out) + ATP + H2O = phosphonate(in) + ADP + phosphate + H(+). Its function is as follows. Part of the ABC transporter complex PhnCDE involved in phosphonates import. Responsible for energy coupling to the transport system. The protein is Phosphonates import ATP-binding protein PhnC 1 of Pseudomonas syringae pv. tomato (strain ATCC BAA-871 / DC3000).